We begin with the raw amino-acid sequence, 205 residues long: Cytochrome c biogenesis ATP-binding export protein CcmA 1 (205 aa).

In terms of domain architecture, ABC transporter spans 2–205 (LEARDLYCER…LALTGGGAGL (204 aa)). 34 to 41 (GGNGAGKT) serves as a coordination point for ATP.

The protein belongs to the ABC transporter superfamily. CcmA exporter (TC 3.A.1.107) family. The complex is composed of two ATP-binding proteins (CcmA) and two transmembrane proteins (CcmB).

It localises to the cell inner membrane. It catalyses the reaction heme b(in) + ATP + H2O = heme b(out) + ADP + phosphate + H(+). Its function is as follows. Part of the ABC transporter complex CcmAB involved in the biogenesis of c-type cytochromes; once thought to export heme, this seems not to be the case, but its exact role is uncertain. Responsible for energy coupling to the transport system. The chain is Cytochrome c biogenesis ATP-binding export protein CcmA 1 from Salmonella typhimurium (strain LT2 / SGSC1412 / ATCC 700720).